The sequence spans 245 residues: Protein DEHYDRATION-INDUCED 19 homolog 4 (245 aa).

The protein belongs to the Di19 family.

The polypeptide is Protein DEHYDRATION-INDUCED 19 homolog 4 (DI19-4) (Oryza sativa subsp. japonica (Rice)).